A 379-amino-acid polypeptide reads, in one-letter code: MAPNIRKSHPLLKIINNSLIDLPSPSNISAWWNFGSLLGICLITQILTGLLLAMHYTADTSLAFSSVAHTCRNVQYGWLIRNLHANGASFFFICIYLHIGRGFYYGSYLYKETWNTGVILLLTLMATAFVGYVLPWGQMSFWGATVITNLFSAIPYIGQTLVEWAWGGFSVDNPTLTRFFALHFLLPFLIAGITIIHLTFLHESGSNNPLGIVSHCDKIPFHPYFSLKDILGFTLMFIPLLILAFFSPNLLGDPENFTPANPLVTPPHIKPEWYFLFAYAILRSIPNKLGGVLALAASVLILFLIPFLHKSKQRSMTFRPLSQMLFWLLVANLLILTWIGSQPVEHPFIIIGQTASFTYFLILLILFPTIGALENKMLY.

Helical transmembrane passes span 34–54, 78–99, 114–134, and 179–199; these read FGSLLGICLITQILTGLLLAM, WLIRNLHANGASFFFICIYLHI, WNTGVILLLTLMATAFVGYVL, and FFALHFLLPFLIAGITIIHLT. Heme b contacts are provided by His84 and His98. Heme b contacts are provided by His183 and His197. His202 is an a ubiquinone binding site. 4 helical membrane-spanning segments follow: residues 227–247, 289–309, 321–341, and 348–368; these read LKDILGFTLMFIPLLILAFFS, LGGVLALAASVLILFLIPFLH, LSQMLFWLLVANLLILTWIGS, and FIIIGQTASFTYFLILLILFP.

It belongs to the cytochrome b family. In terms of assembly, the cytochrome bc1 complex contains 11 subunits: 3 respiratory subunits (MT-CYB, CYC1 and UQCRFS1), 2 core proteins (UQCRC1 and UQCRC2) and 6 low-molecular weight proteins (UQCRH/QCR6, UQCRB/QCR7, UQCRQ/QCR8, UQCR10/QCR9, UQCR11/QCR10 and a cleavage product of UQCRFS1). This cytochrome bc1 complex then forms a dimer. Heme b serves as cofactor.

Its subcellular location is the mitochondrion inner membrane. In terms of biological role, component of the ubiquinol-cytochrome c reductase complex (complex III or cytochrome b-c1 complex) that is part of the mitochondrial respiratory chain. The b-c1 complex mediates electron transfer from ubiquinol to cytochrome c. Contributes to the generation of a proton gradient across the mitochondrial membrane that is then used for ATP synthesis. This chain is Cytochrome b (MT-CYB), found in Dromaius novaehollandiae (Emu).